The primary structure comprises 35 residues: Non-specific lipid-transfer protein 1 (35 aa).

The cysteines at positions 13 and 28 are disulfide-linked.

Seeds.

In terms of biological role, plant non-specific lipid-transfer proteins transfer phospholipids as well as galactolipids across membranes. May play a role in wax or cutin deposition in the cell walls of expanding epidermal cells and certain secretory tissues. Inhibits the growth of F.oxysporum and P.infestans. The chain is Non-specific lipid-transfer protein 1 from Nigella sativa (Black cumin).